Consider the following 255-residue polypeptide: MLARLAAKRLLEIRQVFRQPTSQVTRSLSTALNYHLDSPDNKPDLPWEFSEANQSKVKEILSYYPSNYKQSAVIPLLDLAQQQNGGWLPVSAMNAVAKVIEVAPIRVYEVATFYSMFNRAKVGKYHLLVCGTTPCMIRGSRDIESALLDHLGVKRGEVTKDGLFSVGEMECMGCCVNAPMITVADYSNGSEGYTYNYFEDVTPEKVVEIVEKLRKGEKPPHGTQNPKRIKCGPEGGNKTLLGEPKPPQFRDLDAC.

The transit peptide at Met-1–His-35 directs the protein to the mitochondrion. Residues Cys-130, Cys-135, Cys-171, and Cys-175 each contribute to the [2Fe-2S] cluster site. The tract at residues Arg-214 to Cys-255 is disordered.

The protein belongs to the complex I 24 kDa subunit family. In terms of assembly, complex I is composed of at least 49 different subunits. This is a component of the flavoprotein-sulfur (FP) fragment of the enzyme. It depends on [2Fe-2S] cluster as a cofactor.

Its subcellular location is the mitochondrion inner membrane. It carries out the reaction a ubiquinone + NADH + 5 H(+)(in) = a ubiquinol + NAD(+) + 4 H(+)(out). In terms of biological role, core subunit of the mitochondrial membrane respiratory chain NADH dehydrogenase (Complex I) that is believed to belong to the minimal assembly required for catalysis. Complex I functions in the transfer of electrons from NADH to the respiratory chain. The immediate electron acceptor for the enzyme is believed to be ubiquinone. The protein is NADH dehydrogenase [ubiquinone] flavoprotein 2, mitochondrial of Arabidopsis thaliana (Mouse-ear cress).